A 363-amino-acid chain; its full sequence is Phosphoserine aminotransferase (363 aa).

Arginine 42 provides a ligand contact to L-glutamate. Residues glycine 76–arginine 77, tryptophan 102, threonine 156, aspartate 175, and glutamine 198 contribute to the pyridoxal 5'-phosphate site. The residue at position 199 (lysine 199) is an N6-(pyridoxal phosphate)lysine. Asparagine 240–threonine 241 contributes to the pyridoxal 5'-phosphate binding site.

This sequence belongs to the class-V pyridoxal-phosphate-dependent aminotransferase family. SerC subfamily. Homodimer. The cofactor is pyridoxal 5'-phosphate.

Its subcellular location is the cytoplasm. It carries out the reaction O-phospho-L-serine + 2-oxoglutarate = 3-phosphooxypyruvate + L-glutamate. It catalyses the reaction 4-(phosphooxy)-L-threonine + 2-oxoglutarate = (R)-3-hydroxy-2-oxo-4-phosphooxybutanoate + L-glutamate. The protein operates within amino-acid biosynthesis; L-serine biosynthesis; L-serine from 3-phospho-D-glycerate: step 2/3. It participates in cofactor biosynthesis; pyridoxine 5'-phosphate biosynthesis; pyridoxine 5'-phosphate from D-erythrose 4-phosphate: step 3/5. In terms of biological role, catalyzes the reversible conversion of 3-phosphohydroxypyruvate to phosphoserine and of 3-hydroxy-2-oxo-4-phosphonooxybutanoate to phosphohydroxythreonine. In Shewanella sp. (strain MR-7), this protein is Phosphoserine aminotransferase.